The sequence spans 329 residues: Phospholipid scramblase 4 (329 aa).

Residues 1 to 51 (MSGVVPTAPEQPAGEMENQTKPPDPRPDAPPEYNSHFLPGPPGTAVPPPTG) are disordered. Residues 1-98 (MSGVVPTAPE…PMPNQSVPIT (98 aa)) form a proline-rich domain (PRD) region. Residues 1 to 303 (MSGVVPTAPE…IHFPLDLDVK (303 aa)) are Cytoplasmic-facing. The short motif at 18–25 (NQTKPPDP) is the SH3-binding 1 element. The short motif at 30–33 (PPEY) is the PPxY motif element. The span at 39 to 51 (PGPPGTAVPPPTG) shows a compositional bias: pro residues. The SH3-binding 2 motif lies at 41–49 (PPGTAVPPP). Tyrosine 83 and tyrosine 88 each carry phosphotyrosine; by ABL. The SH3-binding 3 signature appears at 98–106 (TWMPGPTPM). Residues cysteine 197, cysteine 198, cysteine 199, cysteine 201, and cysteine 202 are each lipidated (S-palmitoyl cysteine). The Nuclear localization signal signature appears at 271–283 (NIGSIIRKWNGLL). A helical membrane pass occupies residues 304 to 320 (MKAMIFGACFLIDFMYF). Over 321–329 (ERSPPQRSR) the chain is Extracellular.

It belongs to the phospholipid scramblase family. As to quaternary structure, interacts with PDCD6. Interacts with KPNA2; this interaction mediates the nucleus import of PLSCR4. It depends on Ca(2+) as a cofactor. Mg(2+) is required as a cofactor. Zn(2+) serves as cofactor. As to expression, expressed in heart, brain, placenta, lung, liver, kidney, pancreas, spleen, thymus, prostate, testis, uterus, small intestine and colon. Not detected in peripheral blood lymphocytes.

The protein localises to the cell membrane. Its subcellular location is the nucleus. It carries out the reaction a 1,2-diacyl-sn-glycero-3-phosphocholine(in) = a 1,2-diacyl-sn-glycero-3-phosphocholine(out). The catalysed reaction is a 1,2-diacyl-sn-glycero-3-phospho-L-serine(in) = a 1,2-diacyl-sn-glycero-3-phospho-L-serine(out). Functionally, catalyzes metal ion-induced ATP-independent rapid bidirectional and non-specific movement of phospholipids (lipid scrambling or lipid flip-flop) between the inner and outer leaflet of the plasma membrane and participates in the redistribution of phospholipids between membrane leaflets. Metal ions bind to the calcium-binding site and induce conformation change in the protein. Has a greater affi nity for Ca(2+) than Mg(2+) and Zn(2+). This is Phospholipid scramblase 4 from Homo sapiens (Human).